A 300-amino-acid polypeptide reads, in one-letter code: Glycerol-3-phosphate dehydrogenase [NAD(P)+] (300 aa).

The NADPH site is built by W11, K33, and K79. K79, G107, and S109 together coordinate sn-glycerol 3-phosphate. A111 provides a ligand contact to NADPH. K161, D214, S224, R225, and N226 together coordinate sn-glycerol 3-phosphate. K161 functions as the Proton acceptor in the catalytic mechanism. R225 contributes to the NADPH binding site. NADPH contacts are provided by V249 and E251.

Belongs to the NAD-dependent glycerol-3-phosphate dehydrogenase family.

The protein localises to the cytoplasm. The enzyme catalyses sn-glycerol 3-phosphate + NAD(+) = dihydroxyacetone phosphate + NADH + H(+). It catalyses the reaction sn-glycerol 3-phosphate + NADP(+) = dihydroxyacetone phosphate + NADPH + H(+). It participates in membrane lipid metabolism; glycerophospholipid metabolism. In terms of biological role, catalyzes the reduction of the glycolytic intermediate dihydroxyacetone phosphate (DHAP) to sn-glycerol 3-phosphate (G3P), the key precursor for phospholipid synthesis. The polypeptide is Glycerol-3-phosphate dehydrogenase [NAD(P)+] (Campylobacter lari (strain RM2100 / D67 / ATCC BAA-1060)).